Here is a 101-residue protein sequence, read N- to C-terminus: uncharacterized protein (101 aa).

Residues M1 to K12 are compositionally biased toward basic residues. Disordered regions lie at residues M1–A30 and A65–K87. The segment covering A65–R78 has biased composition (low complexity).

This is an uncharacterized protein from Eremothecium gossypii (strain ATCC 10895 / CBS 109.51 / FGSC 9923 / NRRL Y-1056) (Yeast).